Reading from the N-terminus, the 141-residue chain is 3-hydroxyacyl-[acyl-carrier-protein] dehydratase FabZ (141 aa).

H49 is a catalytic residue.

This sequence belongs to the thioester dehydratase family. FabZ subfamily.

The protein localises to the cytoplasm. It carries out the reaction a (3R)-hydroxyacyl-[ACP] = a (2E)-enoyl-[ACP] + H2O. Its function is as follows. Involved in unsaturated fatty acids biosynthesis. Catalyzes the dehydration of short chain beta-hydroxyacyl-ACPs and long chain saturated and unsaturated beta-hydroxyacyl-ACPs. The chain is 3-hydroxyacyl-[acyl-carrier-protein] dehydratase FabZ from Fusobacterium nucleatum subsp. nucleatum (strain ATCC 25586 / DSM 15643 / BCRC 10681 / CIP 101130 / JCM 8532 / KCTC 2640 / LMG 13131 / VPI 4355).